Consider the following 363-residue polypeptide: Methyltransferase pynC (363 aa).

S-adenosyl-L-methionine-binding positions include 199-200, D225, 254-255, R270, and R271; these read GG and SF.

Belongs to the class I-like SAM-binding methyltransferase superfamily. Cation-independent O-methyltransferase family.

Its pathway is secondary metabolite biosynthesis. In terms of biological role, methyltransferase; part of the gene cluster that mediates the biosynthesis of pyranonigrins, a family of antioxidative compounds. The first step of pyranonigrins biosynthesis is performed by the hybrid PKS-NRPS synthetase that condenses 6 malonyl-CoA units to an acetyl starter unit, to form a 1,3,5-trioxotetradecane-6,8-dienyl-ACP. The enoyl reductase (ER) domain of pynA is likely to be functional during the first two rounds of polyketide chain extension, to generate the saturated C-C bonds of the alkyl side chain. PynA subsequently forms the amide bond between the acyl chain and L-serine. Although pynA has a terminal reductase domain, it appears to require the thioesterase pynI for the release of the straight-chain intermediate from pynA via the formation of a tetramic acid pyranonigrin J. The methyltransferase pynC then coverts pyranonigrin J to pyranonigrin I via N-methylation. The FAD-dependent monooxygenase pynG catalyzes an epoxidation-mediated cyclization to form the dihydro-gamma-pyrone moiety, followed by pynD-catalyzed oxidation of the alcohol to the ketone and enolization to yield the characteristic tetramic acid-fused gamma-pyrone core of pyranonigrin H. Pyranonigrin H is substrate of pynH for dehydration-mediated exo-methylene formation from the serine side chain to produce pyranonigrin E, before the oxidase pynE reduces the exo-methylene of pyranonigrin E into a pendant methyl to form pyranonigrin G. The FAD-linked oxidoreductase pynB performs the reverse reaction and converts pyranonigrin G back to pyranonigrin E. In Aspergillus niger (strain ATCC MYA-4892 / CBS 513.88 / FGSC A1513), this protein is Methyltransferase pynC.